A 254-amino-acid polypeptide reads, in one-letter code: Phosphonates import ATP-binding protein PhnC 2 (254 aa).

In terms of domain architecture, ABC transporter spans 4-248 (LEVNNLGKHY…KIESIYGFQQ (245 aa)). 37-44 (GPSGAGKS) is a binding site for ATP.

This sequence belongs to the ABC transporter superfamily. Phosphonates importer (TC 3.A.1.9.1) family. As to quaternary structure, the complex is composed of two ATP-binding proteins (PhnC), two transmembrane proteins (PhnE) and a solute-binding protein (PhnD).

Its subcellular location is the cell membrane. The catalysed reaction is phosphonate(out) + ATP + H2O = phosphonate(in) + ADP + phosphate + H(+). Its function is as follows. Part of the ABC transporter complex PhnCDE involved in phosphonates import. Responsible for energy coupling to the transport system. The chain is Phosphonates import ATP-binding protein PhnC 2 from Oceanobacillus iheyensis (strain DSM 14371 / CIP 107618 / JCM 11309 / KCTC 3954 / HTE831).